The chain runs to 201 residues: Aminoglycoside N(6')-acetyltransferase type 1 (201 aa).

Residues 25–192 (VTLRLMTEHD…PAVYMVQTRQ (168 aa)) enclose the N-acetyltransferase domain. Residues tryptophan 51 and aspartate 154 each coordinate substrate. Position 159 (asparagine 159) interacts with acetyl-CoA.

Homodimer.

It catalyses the reaction kanamycin B + acetyl-CoA = N(6')-acetylkanamycin B + CoA + H(+). In terms of biological role, catalyzes the transfer of an acetyl group from acetyl-CoA to the 6'-amino group of aminoglycoside molecules conferring resistance to antibiotics containing the purpurosamine ring including amikacin and kanamycin. This is Aminoglycoside N(6')-acetyltransferase type 1 (aacA4) from Serratia marcescens.